A 414-amino-acid chain; its full sequence is Imidazolonepropionase (414 aa).

Residues His73 and His75 each coordinate Fe(3+). The Zn(2+) site is built by His73 and His75. 4-imidazolone-5-propanoate contacts are provided by Arg82, Tyr145, and His178. Tyr145 contacts N-formimidoyl-L-glutamate. His249 contributes to the Fe(3+) binding site. Zn(2+) is bound at residue His249. Gln252 serves as a coordination point for 4-imidazolone-5-propanoate. Fe(3+) is bound at residue Asp324. Asp324 lines the Zn(2+) pocket. Positions 326 and 328 each coordinate N-formimidoyl-L-glutamate. A 4-imidazolone-5-propanoate-binding site is contributed by Ser329.

This sequence belongs to the metallo-dependent hydrolases superfamily. HutI family. It depends on Zn(2+) as a cofactor. Fe(3+) serves as cofactor.

Its subcellular location is the cytoplasm. It carries out the reaction 4-imidazolone-5-propanoate + H2O = N-formimidoyl-L-glutamate. It functions in the pathway amino-acid degradation; L-histidine degradation into L-glutamate; N-formimidoyl-L-glutamate from L-histidine: step 3/3. Its function is as follows. Catalyzes the hydrolytic cleavage of the carbon-nitrogen bond in imidazolone-5-propanoate to yield N-formimidoyl-L-glutamate. It is the third step in the universal histidine degradation pathway. In Shewanella pealeana (strain ATCC 700345 / ANG-SQ1), this protein is Imidazolonepropionase.